The chain runs to 1749 residues: Kinase non-catalytic C-lobe domain-containing protein 1 (1749 aa).

The 181-residue stretch at 37–217 (VSLADILSLR…QDVSESSWRE (181 aa)) folds into the KIND 1 domain. Disordered stretches follow at residues 210–275 (VSES…SHSR) and 361–435 (CRLW…ARQL). 2 stretches are compositionally biased toward basic and acidic residues: residues 363–373 (LWPEQEPEHQL) and 410–430 (ADPR…RIPE). The KIND 2 domain occupies 444–608 (VSLQDLLSQL…RASICQVYQE (165 aa)). Disordered regions lie at residues 689–871 (ARDQ…RPAD) and 962–1061 (QASP…GGAS). A compositionally biased stretch (basic and acidic residues) spans 702 to 717 (ERGGQREGEGEEKLSL). Low complexity-rich tracts occupy residues 739-748 (QGAAPEPLGA) and 766-779 (PANQ…AAPG). A compositionally biased stretch (basic residues) spans 823–833 (HGPRHPPKPPR). The span at 853–871 (GERDDQSPDSVPERPRPAD) shows a compositional bias: basic and acidic residues. The residue at position 964 (S964) is a Phosphoserine. Residues 980-990 (SQSPRSPSSKR) are compositionally biased toward low complexity. Positions 1005-1019 (RTSSRAPCSPTSVSD) are enriched in polar residues. A compositionally biased stretch (basic and acidic residues) spans 1040-1056 (VKAERAQQPEAGEDRRP). A coiled-coil region spans residues 1133–1190 (QQLMMEKRNYRKTLKFYQKLLQKEKRNKGSDVKTMLSKLKGQLEEMKSRVQFLSLVKK). Positions 1246-1371 (KARILQAGTP…HLLGLLEVGM (126 aa)) constitute an N-terminal Ras-GEF domain. The Ras-GEF domain occupies 1468–1719 (STHQLFSQLT…SGADISTLAA (252 aa)).

In terms of assembly, interacts (via KIND2) with MAP2; the interaction enhances MAP2 phosphorylation and localizes KNDC1 to dendrites. In terms of tissue distribution, expressed specifically in the cerebral cortex.

Its subcellular location is the cell projection. It localises to the dendrite. The protein resides in the perikaryon. Its function is as follows. RAS-Guanine nucleotide exchange factor (GEF) that controls the negative regulation of neuronal dendrite growth by mediating a signaling pathway linking RAS and MAP2. May be involved in cellular senescence. The chain is Kinase non-catalytic C-lobe domain-containing protein 1 from Homo sapiens (Human).